The primary structure comprises 290 residues: Transcription cofactor vestigial-like protein 4 (290 aa).

M1 carries the post-translational modification N-acetylmethionine. Positions A17 to P30 are enriched in basic and acidic residues. 4 disordered regions span residues A17 to E65, L85 to E106, L140 to R161, and A254 to S290. Position 52 is a phosphoserine (S52). Residues D92–I105 show a composition bias toward basic and acidic residues. S149 is subject to Phosphoserine. The span at P150–R161 shows a compositional bias: polar residues. A Phosphothreonine modification is found at T153. Over residues P272 to S290 the composition is skewed to low complexity. S274 carries the post-translational modification Phosphoserine.

Belongs to the vestigial family. Interacts with TEFs. Interacts with IRF2BP2.

It is found in the nucleus. Functionally, may act as a specific coactivator for the mammalian TEFs. The polypeptide is Transcription cofactor vestigial-like protein 4 (Homo sapiens (Human)).